A 527-amino-acid polypeptide reads, in one-letter code: Peptide chain release factor 3 (527 aa).

Residues 9–277 (AKRRTFAIIS…AVVNWAPKPL (269 aa)) enclose the tr-type G domain. Residues 18–25 (SHPDAGKT), 86–90 (DTPGH), and 140–143 (NKLD) contribute to the GTP site.

It belongs to the TRAFAC class translation factor GTPase superfamily. Classic translation factor GTPase family. PrfC subfamily.

Its subcellular location is the cytoplasm. In terms of biological role, increases the formation of ribosomal termination complexes and stimulates activities of RF-1 and RF-2. It binds guanine nucleotides and has strong preference for UGA stop codons. It may interact directly with the ribosome. The stimulation of RF-1 and RF-2 is significantly reduced by GTP and GDP, but not by GMP. In Pseudomonas syringae pv. syringae (strain B728a), this protein is Peptide chain release factor 3.